The chain runs to 293 residues: Acetylglutamate kinase (293 aa).

Residues 68–69, R90, and N189 contribute to the substrate site; that span reads GG.

It belongs to the acetylglutamate kinase family. ArgB subfamily.

Its subcellular location is the cytoplasm. It catalyses the reaction N-acetyl-L-glutamate + ATP = N-acetyl-L-glutamyl 5-phosphate + ADP. It participates in amino-acid biosynthesis; L-arginine biosynthesis; N(2)-acetyl-L-ornithine from L-glutamate: step 2/4. Catalyzes the ATP-dependent phosphorylation of N-acetyl-L-glutamate. The sequence is that of Acetylglutamate kinase from Mycolicibacterium smegmatis (strain ATCC 700084 / mc(2)155) (Mycobacterium smegmatis).